Consider the following 426-residue polypeptide: Formyl-CoA:oxalate CoA-transferase (426 aa).

Residues 17–18 (QS), Arg-38, 72–75 (LDTK), 96–98 (NFG), Arg-104, and 136–139 (KVYE) contribute to the CoA site. The Nucleophile role is filled by Asp-168. 247–249 (GGQ) lines the substrate pocket.

The protein belongs to the CoA-transferase III family. Frc subfamily. As to quaternary structure, homodimer.

It carries out the reaction formyl-CoA + oxalate = oxalyl-CoA + formate. It functions in the pathway metabolic intermediate degradation; oxalate degradation; CO(2) and formate from oxalate: step 1/2. Functionally, involved in the catabolism of oxalate and in the adapatation to low pH via the induction of the oxalate-dependent acid tolerance response (ATR). Catalyzes the transfer of the CoA moiety from formyl-CoA to oxalate. The polypeptide is Formyl-CoA:oxalate CoA-transferase (Rhodopseudomonas palustris (strain BisB18)).